Consider the following 843-residue polypeptide: Structure-specific endonuclease subunit SLX4 (843 aa).

Disordered stretches follow at residues 26-111 (SPPS…KTTT), 281-313 (AIPTPTESSTTEDIQGSSSKQQRVKAKKPQKGK), 339-377 (NVAPKSPGRKNISNRPSGMKHSNSGRGKSSTLKNDNGPP), 603-655 (SKTF…AKAL), and 729-748 (ATPNARHSRQRSSSTSFSIE). 2 stretches are compositionally biased toward polar residues: residues 50 to 69 (ASFSKTPSRKTTSPDSNGEN) and 285 to 301 (PTESSTTEDIQGSSSKQ). The span at 302–311 (QRVKAKKPQK) shows a compositional bias: basic residues. 2 stretches are compositionally biased toward polar residues: residues 349 to 372 (NISNRPSGMKHSNSGRGKSSTLKN) and 603 to 616 (SKTFMPESKPNQGT). The segment covering 617 to 636 (DDARKNGFRKENHSDVRVRP) has biased composition (basic and acidic residues). The span at 739–748 (RSSSTSFSIE) shows a compositional bias: low complexity.

It belongs to the SLX4 family. In terms of assembly, forms a heterodimer with SLX1. Post-translationally, phosphorylated in response to DNA damage.

The protein localises to the nucleus. Its function is as follows. Regulatory subunit of the SLX1-SLX4 structure-specific endonuclease that resolves DNA secondary structures generated during DNA repair and recombination. Has endonuclease activity towards branched DNA substrates, introducing single-strand cuts in duplex DNA close to junctions with ss-DNA. This is Structure-specific endonuclease subunit SLX4 from Ajellomyces capsulatus (strain G186AR / H82 / ATCC MYA-2454 / RMSCC 2432) (Darling's disease fungus).